A 275-amino-acid polypeptide reads, in one-letter code: Large ribosomal subunit protein uL2 (275 aa).

The segment at 224–275 (AMNPVDHPHGGGEAKAGQGNPHPVTPWGVPTKGYKTRKNKRTQQFIVRDRRG) is disordered.

It belongs to the universal ribosomal protein uL2 family. Part of the 50S ribosomal subunit. Forms a bridge to the 30S subunit in the 70S ribosome.

Its function is as follows. One of the primary rRNA binding proteins. Required for association of the 30S and 50S subunits to form the 70S ribosome, for tRNA binding and peptide bond formation. It has been suggested to have peptidyltransferase activity; this is somewhat controversial. Makes several contacts with the 16S rRNA in the 70S ribosome. This Xanthomonas axonopodis pv. citri (strain 306) protein is Large ribosomal subunit protein uL2.